A 909-amino-acid chain; its full sequence is Tubulin polyglutamylase TTLL7 (909 aa).

Residues 40–392 (NGAITANVVG…RASDKKKNLA (353 aa)) form the TTL domain. Residues Lys162, 168–169 (MG), 190–193 (QEYL), and 203–205 (KFD) each bind ATP. Arg229 contacts L-glutamate. 251-252 (TN) is an ATP binding site. Residues Tyr253, Ser254, and Lys273 each coordinate L-glutamate. Mg(2+) contacts are provided by Asp338, Glu351, and Asn353. Residue Lys369 coordinates L-glutamate. The tract at residues 390 to 452 (NLAKQKAEAQ…ISREEYENRH (63 aa)) is c-MTBD region. Disordered stretches follow at residues 517-580 (DEKL…KVSY) and 603-688 (KAAR…PSIS). A compositionally biased stretch (basic and acidic residues) spans 518-531 (EKLSGKPTRPKEPR). Over residues 532-542 (TLSSMPESTQT) the composition is skewed to polar residues. Residues 548–562 (NYSSHSSSNSTGSSS) show a composition bias toward low complexity. Residues 571–580 (KEGKEKKVSY) are compositionally biased toward basic and acidic residues. The segment covering 604 to 625 (AARPFSNSSSPSSAASMRRSVS) has biased composition (low complexity). Positions 626-657 (CPRSITALNTQSPTTDQRPFSSRISSTITRPL) are enriched in polar residues. Low complexity predominate over residues 658–673 (SGNRTNSLNRSSSSNR). A compositionally biased stretch (polar residues) spans 674–688 (VPQSGTSGSVYPSIS).

The protein belongs to the tubulin--tyrosine ligase family. Interacts with both alpha- and beta-tubulin (via C-terminal tubulin tails). Mg(2+) serves as cofactor.

The protein resides in the cell projection. Its subcellular location is the cilium. The protein localises to the cytoplasm. It localises to the cytoskeleton. It is found in the cilium basal body. The protein resides in the dendrite. Its subcellular location is the perikaryon. It catalyses the reaction L-glutamyl-[protein] + L-glutamate + ATP = gamma-L-glutamyl-L-glutamyl-[protein] + ADP + phosphate + H(+). It carries out the reaction (L-glutamyl)(n)-gamma-L-glutamyl-L-glutamyl-[protein] + L-glutamate + ATP = (L-glutamyl)(n+1)-gamma-L-glutamyl-L-glutamyl-[protein] + ADP + phosphate + H(+). Polyglutamylase which modifies tubulin, generating polyglutamate side chains of variable lengths on the gamma-carboxyl group of specific glutamate residues within the C-terminal tail of tubulin. Mediates both ATP-dependent initiation and elongation steps of the polyglutamylation reaction. Preferentially modifies the beta-tubulin tail over an alpha-tail. Competes with monoglycylase TTLL3 for modification site on beta-tubulin substrate, thereby creating an anticorrelation between glycylation and glutamylation reactions. The sequence is that of Tubulin polyglutamylase TTLL7 from Xenopus tropicalis (Western clawed frog).